A 396-amino-acid polypeptide reads, in one-letter code: Putative carbamoyltransferase YgeW (396 aa).

Carbamoyl phosphate-binding positions include 71-74 (STRT), Q98, 165-168 (HPTQ), and 330-331 (CL).

This sequence belongs to the aspartate/ornithine carbamoyltransferase superfamily. Homotrimer.

In Escherichia coli O6:H1 (strain CFT073 / ATCC 700928 / UPEC), this protein is Putative carbamoyltransferase YgeW (ygeW).